Consider the following 327-residue polypeptide: Glycerol-3-phosphate dehydrogenase [NAD(P)+] (327 aa).

NADPH-binding residues include Trp-13, His-33, and Lys-102. Residues Lys-102, Gly-130, and Ser-132 each coordinate sn-glycerol 3-phosphate. Ala-134 provides a ligand contact to NADPH. Sn-glycerol 3-phosphate-binding residues include Lys-185, Asp-238, Ser-248, Arg-249, and Asn-250. Lys-185 serves as the catalytic Proton acceptor. Arg-249 is a binding site for NADPH. Residue Glu-275 participates in NADPH binding.

It belongs to the NAD-dependent glycerol-3-phosphate dehydrogenase family.

The protein resides in the cytoplasm. The enzyme catalyses sn-glycerol 3-phosphate + NAD(+) = dihydroxyacetone phosphate + NADH + H(+). The catalysed reaction is sn-glycerol 3-phosphate + NADP(+) = dihydroxyacetone phosphate + NADPH + H(+). It functions in the pathway membrane lipid metabolism; glycerophospholipid metabolism. Its function is as follows. Catalyzes the reduction of the glycolytic intermediate dihydroxyacetone phosphate (DHAP) to sn-glycerol 3-phosphate (G3P), the key precursor for phospholipid synthesis. The protein is Glycerol-3-phosphate dehydrogenase [NAD(P)+] of Vesicomyosocius okutanii subsp. Calyptogena okutanii (strain HA).